Reading from the N-terminus, the 269-residue chain is Putative pyruvate, phosphate dikinase regulatory protein (269 aa).

147–154 is an ADP binding site; it reads GLSRTSKT.

This sequence belongs to the pyruvate, phosphate/water dikinase regulatory protein family. PDRP subfamily.

The enzyme catalyses N(tele)-phospho-L-histidyl/L-threonyl-[pyruvate, phosphate dikinase] + ADP = N(tele)-phospho-L-histidyl/O-phospho-L-threonyl-[pyruvate, phosphate dikinase] + AMP + H(+). It catalyses the reaction N(tele)-phospho-L-histidyl/O-phospho-L-threonyl-[pyruvate, phosphate dikinase] + phosphate + H(+) = N(tele)-phospho-L-histidyl/L-threonyl-[pyruvate, phosphate dikinase] + diphosphate. Its function is as follows. Bifunctional serine/threonine kinase and phosphorylase involved in the regulation of the pyruvate, phosphate dikinase (PPDK) by catalyzing its phosphorylation/dephosphorylation. This Clostridium botulinum (strain ATCC 19397 / Type A) protein is Putative pyruvate, phosphate dikinase regulatory protein.